The primary structure comprises 32 residues: Cytochrome b6-f complex subunit 7 (32 aa).

The helical transmembrane segment at 5–25 (IFTVAGVMWALVLTGLSVGFG) threads the bilayer.

This sequence belongs to the PetM family. In terms of assembly, the 4 large subunits of the cytochrome b6-f complex are cytochrome b6, subunit IV (17 kDa polypeptide, PetD), cytochrome f and the Rieske protein, while the 4 small subunits are PetG, PetL, PetM and PetN. The complex functions as a dimer.

It localises to the plastid. The protein resides in the chloroplast thylakoid membrane. Component of the cytochrome b6-f complex, which mediates electron transfer between photosystem II (PSII) and photosystem I (PSI), cyclic electron flow around PSI, and state transitions. This is Cytochrome b6-f complex subunit 7 from Emiliania huxleyi (Coccolithophore).